The sequence spans 489 residues: MSQLVQFIDGQWLAGAGKPFESKDPAKNQVIWQGEAASAAQVEAAVKAARHAFYHWSDLALDYRLAIVRRYADLLGEHKEALALTIARETGKPLWETRTEVAAMQGKIAISIRAHDERTGTVENPMPGAKAFVRHKPHGVVAVFGPYNFPGHLPNGHIVPALIAGNTVVFKPSELTPMVAEAMLKIWQEAGLPKGVLNLVQGEVDTGKALAGNPDIDGLFFTGSSRTGHFLHQQFAGQPGKILALEMGGNNPLIVKDVSDIDGAVHAIVQSAFITSGQRCTCSRRLFVERSVQGDALVKRLVEVVGQIKVGLYDAAEQPFMGAMISEKAALGMVEAQANLQRLGGESLLTLTHLEAGTGFVSPGIIDVTAVSALPDEEYFGPLLQLIRYDDFDAAIDQGNATSFGLSAGLLGDSEADWQHFFKRIRAGIVNWNKPITGASSAAPFGGIGASGNHRASAYYAADYCAYPVASVEDSKAAMPDQLSPGLTF.

NAD(+) is bound at residue 223 to 228 (GSSRTG). Catalysis depends on residues glutamate 246 and cysteine 280.

Belongs to the aldehyde dehydrogenase family. AstD subfamily.

The catalysed reaction is N-succinyl-L-glutamate 5-semialdehyde + NAD(+) + H2O = N-succinyl-L-glutamate + NADH + 2 H(+). The protein operates within amino-acid degradation; L-arginine degradation via AST pathway; L-glutamate and succinate from L-arginine: step 4/5. Catalyzes the NAD-dependent reduction of succinylglutamate semialdehyde into succinylglutamate. This chain is N-succinylglutamate 5-semialdehyde dehydrogenase, found in Aeromonas hydrophila subsp. hydrophila (strain ATCC 7966 / DSM 30187 / BCRC 13018 / CCUG 14551 / JCM 1027 / KCTC 2358 / NCIMB 9240 / NCTC 8049).